The primary structure comprises 427 residues: Steroid C26-monooxygenase (427 aa).

Cys-360 contributes to the heme binding site.

The protein belongs to the cytochrome P450 family. Heme is required as a cofactor.

It catalyses the reaction cholest-4-en-3-one + 6 reduced [2Fe-2S]-[ferredoxin] + 3 O2 + 5 H(+) = (25S)-3-oxocholest-4-en-26-oate + 6 oxidized [2Fe-2S]-[ferredoxin] + 4 H2O. It participates in steroid metabolism; cholesterol degradation. In terms of biological role, involved in the utilization of cholesterol as the sole carbon and energy source by degrading the side chain. Primarily catalyzes the sequential oxidation of the terminal methyl of cholest-4-en-3-one into (25S)-26-hydroxycholest-4-en-3-one (alcohol), (25S)-26-oxocholest-4-en-3-one (aldehyde), to finally yield the carboxylic acid (25S)-3-oxocholest-4-en-26-oate. Also able to sequentially oxidize cholesterol itself, not only cholest-4-en-3-one. The chain is Steroid C26-monooxygenase from Mycolicibacterium smegmatis (strain ATCC 700084 / mc(2)155) (Mycobacterium smegmatis).